Reading from the N-terminus, the 185-residue chain is Ribosome-recycling factor (185 aa).

The protein belongs to the RRF family.

The protein resides in the cytoplasm. Responsible for the release of ribosomes from messenger RNA at the termination of protein biosynthesis. May increase the efficiency of translation by recycling ribosomes from one round of translation to another. In Xylella fastidiosa (strain Temecula1 / ATCC 700964), this protein is Ribosome-recycling factor.